The chain runs to 435 residues: Fez family zinc finger protein 2 (435 aa).

The Engrailed homology 1 repressor signature appears at 27 to 42; it reads SLAFSIERIMAKTSEP. C2H2-type zinc fingers lie at residues 254–276, 282–304, 310–332, 338–360, 366–388, and 394–417; these read FTCEVCGKVFNAHYNLTRHMPVH, FVCKVCGKGFRQASTLCRHKIIH, HKCNQCGKAFNRSSTLNTHIRIH, FVCEFCGKGFHQKGNYKNHKLTH, YKCTICNKAFHQIYNLTFHMHTH, and FTCGTCGKGFCRNFDLKKHVRKLH.

This sequence belongs to the krueppel C2H2-type zinc-finger protein family.

Its subcellular location is the nucleus. Functionally, transcription repressor. Component of the regulatory cascade that controls the development of dopaminergic (DA) and serotonergic (5HT) neurons. The polypeptide is Fez family zinc finger protein 2 (fezf2) (Xenopus tropicalis (Western clawed frog)).